A 946-amino-acid polypeptide reads, in one-letter code: Alanine--tRNA ligase, cytoplasmic (946 aa).

The Zn(2+) site is built by histidine 591, histidine 595, cysteine 710, and histidine 714.

Belongs to the class-II aminoacyl-tRNA synthetase family. In terms of assembly, monomer. Requires Zn(2+) as cofactor.

Its subcellular location is the cytoplasm. The catalysed reaction is tRNA(Ala) + L-alanine + ATP = L-alanyl-tRNA(Ala) + AMP + diphosphate. In terms of biological role, catalyzes the attachment of alanine to tRNA(Ala) in a two-step reaction: alanine is first activated by ATP to form Ala-AMP and then transferred to the acceptor end of tRNA(Ala). Also edits incorrectly charged tRNA(Ala) via its editing domain. The sequence is that of Alanine--tRNA ligase, cytoplasmic (alaS) from Dictyostelium discoideum (Social amoeba).